A 365-amino-acid polypeptide reads, in one-letter code: Histidinol-phosphate aminotransferase (365 aa).

Lys-222 is subject to N6-(pyridoxal phosphate)lysine.

It belongs to the class-II pyridoxal-phosphate-dependent aminotransferase family. Histidinol-phosphate aminotransferase subfamily. Homodimer. Requires pyridoxal 5'-phosphate as cofactor.

It carries out the reaction L-histidinol phosphate + 2-oxoglutarate = 3-(imidazol-4-yl)-2-oxopropyl phosphate + L-glutamate. The protein operates within amino-acid biosynthesis; L-histidine biosynthesis; L-histidine from 5-phospho-alpha-D-ribose 1-diphosphate: step 7/9. This chain is Histidinol-phosphate aminotransferase, found in Geobacillus sp. (strain WCH70).